The chain runs to 128 residues: DNA-directed RNA polymerase subunit omega (128 aa).

The segment at 87–106 (ARSSQAAPKSAPGQEIGKSF) is disordered.

This sequence belongs to the RNA polymerase subunit omega family. In terms of assembly, the RNAP catalytic core consists of 2 alpha, 1 beta, 1 beta' and 1 omega subunit. When a sigma factor is associated with the core the holoenzyme is formed, which can initiate transcription.

The enzyme catalyses RNA(n) + a ribonucleoside 5'-triphosphate = RNA(n+1) + diphosphate. Promotes RNA polymerase assembly. Latches the N- and C-terminal regions of the beta' subunit thereby facilitating its interaction with the beta and alpha subunits. The chain is DNA-directed RNA polymerase subunit omega from Anaplasma marginale (strain Florida).